A 90-amino-acid chain; its full sequence is Acylphosphatase (90 aa).

An Acylphosphatase-like domain is found at 5–90 (SYLFNVKGKV…WQELTDFKMY (86 aa)). Active-site residues include arginine 20 and asparagine 38.

This sequence belongs to the acylphosphatase family.

It catalyses the reaction an acyl phosphate + H2O = a carboxylate + phosphate + H(+). The chain is Acylphosphatase (acyP) from Aliivibrio fischeri (strain ATCC 700601 / ES114) (Vibrio fischeri).